A 363-amino-acid chain; its full sequence is Ribosomal RNA large subunit methyltransferase M (363 aa).

Residues S190, 223–226 (CPGG), D242, D262, and D279 contribute to the S-adenosyl-L-methionine site. The Proton acceptor role is filled by K308.

Belongs to the class I-like SAM-binding methyltransferase superfamily. RNA methyltransferase RlmE family. RlmM subfamily. Monomer.

The protein resides in the cytoplasm. It catalyses the reaction cytidine(2498) in 23S rRNA + S-adenosyl-L-methionine = 2'-O-methylcytidine(2498) in 23S rRNA + S-adenosyl-L-homocysteine + H(+). Functionally, catalyzes the 2'-O-methylation at nucleotide C2498 in 23S rRNA. The protein is Ribosomal RNA large subunit methyltransferase M of Vibrio atlanticus (strain LGP32) (Vibrio splendidus (strain Mel32)).